The primary structure comprises 156 residues: uncharacterized protein (156 aa).

Helical transmembrane passes span 7-29 (AQISVVLSTIIIMTYAFLSSYFL), 42-64 (YFALSNLLSLSLPFVCAWFPYLF), 69-88 (AVTGSALSAFGLFLFFAITS), 98-120 (AAIWVIYFFWLIGAALAGVYPAL), and 133-155 (ALVLSALFTVVVSFIIGFLISRI).

It localises to the cell membrane. This is an uncharacterized protein from Pasteurella multocida (strain Pm70).